The following is a 208-amino-acid chain: CASP-like protein 1D1 (208 aa).

Positions 1 to 36 (MSSVDTEKPAPPPLETEAPPPPPPPPPPPPPPPPPP) are disordered. The Cytoplasmic segment spans residues 1–41 (MSSVDTEKPAPPPLETEAPPPPPPPPPPPPPPPPPPAGYSA). Pro residues predominate over residues 9–36 (PAPPPLETEAPPPPPPPPPPPPPPPPPP). Residues 42-62 (LDVVLRILLLGSAVASVVVMV) form a helical membrane-spanning segment. Residues 63–89 (TSVQTKLIAVAGVPVLVSNKAKFQNSP) are Extracellular-facing. The chain crosses the membrane as a helical span at residues 90 to 110 (AFIYFVAALSVVGLYSIITTL). Residues 111–133 (ASFIFISKPSCSTKTILHLAIWD) lie on the Cytoplasmic side of the membrane. Residues 134 to 154 (VLMLGLAASATGTAGGVAYVG) form a helical membrane-spanning segment. At 155–180 (LKGNSHVGWNKVCNTYDKFCRHVGGS) the chain is on the extracellular side. Residues 181–201 (IAVALFASILLVLLVWLSLFT) form a helical membrane-spanning segment. Residues 202–208 (LYSRIRK) are Cytoplasmic-facing.

It belongs to the Casparian strip membrane proteins (CASP) family. Homodimer and heterodimers.

The protein resides in the cell membrane. This Vitis vinifera (Grape) protein is CASP-like protein 1D1.